The primary structure comprises 460 residues: MLRWLIGGGREPQGLAEKAALQTIGEDQGQNPYTELLVLEAHRDIVRFLVRLDDFRFASAGDDGIIVVWNAQTGEKLLELRGHTQKITAVIAFPPLDSCEASSQLLLTASADRTVGVWDCDTGRQIQRVTCFQSTVKCLTVLQRLDIWLSGGSDLGVWNRKLDLLCKTSHLSDTGISALVEIPGNCVAAAVGRELIIFRLVTPTEELPEWDIIEVKRLLDHQDNILSLANINDTGFVTGSHVGELLIWDALDWTVQACERTFWSPTAQLDAQQEIKLFQKQNDISINHFTCDEENIFAAVGRGLYVYNLQLKRVIACQKTAHDSNILHIDKLPNRQLISCSEDGAVRMWEVREKQQLAAEPVPTGFFNMWGFGRVNKQASQPVKKQEENVTTCSLELIGDLIGHSSSVEMFLYFEDHGLVTCSADHLIILWKNGERESGVRSLKLFQKLEENGDLYPESP.

6 WD repeats span residues 40–79, 82–128, 131–168, 220–258, 321–359, and 403–441; these read EAHR…KLLE, GHTQ…QIQR, CFQS…LCKT, DHQD…VQAC, AHDS…QLAA, and GHSS…SGVR.

In terms of assembly, component of the C9orf72-SMCR8 complex, at least composed of C9orf72, SMCR8 and WDR41. The complex is formed of two protomers, each individually consisting of one molecule each of C9orf72, SMCR8 and WDR41. The protomers homodimerize via an interaction between C9orf72 (via C-terminus) and SMCR8 (via N-terminus). Within each protomer SMCR8 (via DENN domain) acts as a bridging protein between WDR41 (via C-terminus and N-terminus) and C9orf72 (via C-terminus). The C9orf72-SMCR8 complex associates with the ULK1/ATG1 kinase complex.

It localises to the cytoplasm. Functionally, non-catalytic component of the C9orf72-SMCR8 complex, a complex that has guanine nucleotide exchange factor (GEF) activity and regulates autophagy. The C9orf72-SMCR8 complex promotes the exchange of GDP to GTP, converting inactive GDP-bound RAB8A and RAB39B into their active GTP-bound form, thereby promoting autophagosome maturation. As part of the C9orf72-SMCR8 complex, stimulates RAB8A and RAB11A GTPase activity in vitro, however WDR42 is shown not be an essential complex component for this function. The C9orf72-SMCR8 complex also acts as a negative regulator of autophagy initiation by interacting with the ULK1/ATG1 kinase complex and inhibiting its protein kinase activity. In Mus musculus (Mouse), this protein is WD repeat-containing protein 41.